The following is a 219-amino-acid chain: MTSSVIPPSPSAADYAAEGDRPLVPETDNPIGLFQDWMAQARASEPNDSNAMSLATVDADGRPDVRIVLLKGVDSEGFTFFTNLESVKGVQLAANPVAALCFHWKSQRRQVRVRGGVAPVSAAEADAYFASRAAQSRISAIASDQSRPLADRAIFEQRVAEISSVYGDDNDIPRPPHWGGFRLVPTEIEFWQDQAFRMHDRLRFYRKADGGWATVRLYP.

The interval 1 to 23 (MTSSVIPPSPSAADYAAEGDRPL) is disordered. Residues 66 to 71 (RIVLLK), 81 to 82 (FT), lysine 88, and glutamine 110 each bind FMN. Lysine 71 contacts substrate. Substrate is bound by residues tyrosine 128, arginine 132, and serine 136. Residues 145-146 (QS) and tryptophan 191 each bind FMN. A substrate-binding site is contributed by 197 to 199 (RMH). Arginine 201 is a binding site for FMN.

This sequence belongs to the pyridoxamine 5'-phosphate oxidase family. Homodimer. FMN serves as cofactor.

The enzyme catalyses pyridoxamine 5'-phosphate + O2 + H2O = pyridoxal 5'-phosphate + H2O2 + NH4(+). The catalysed reaction is pyridoxine 5'-phosphate + O2 = pyridoxal 5'-phosphate + H2O2. It functions in the pathway cofactor metabolism; pyridoxal 5'-phosphate salvage; pyridoxal 5'-phosphate from pyridoxamine 5'-phosphate: step 1/1. The protein operates within cofactor metabolism; pyridoxal 5'-phosphate salvage; pyridoxal 5'-phosphate from pyridoxine 5'-phosphate: step 1/1. Its function is as follows. Catalyzes the oxidation of either pyridoxine 5'-phosphate (PNP) or pyridoxamine 5'-phosphate (PMP) into pyridoxal 5'-phosphate (PLP). The protein is Pyridoxine/pyridoxamine 5'-phosphate oxidase of Hyphomonas neptunium (strain ATCC 15444).